The primary structure comprises 185 residues: Lysine-rich arabinogalactan protein 17 (185 aa).

Residues 1–21 (MTRNILLTVTLICIVFITVGG) form the signal peptide. Residues 25-160 (ATAPIHSPST…FSPAADDQSG (136 aa)) form a disordered region. Residues 43-68 (SPAISPAAPTPESTEAPAKTPVEAPV) show a composition bias toward low complexity. Residues 69–88 (EAPPSPTPASTPQISPPAPS) are compositionally biased toward pro residues. Over residues 111–122 (TKHKKKTKKHKT) the composition is skewed to basic residues. Positions 135–146 (PPAPPGEAPGPG) are enriched in pro residues. The GPI-anchor amidated serine moiety is linked to residue S159. The propeptide at 160–185 (GAQRISVVIQMVGAAAIAWSLLVLAF) is removed in mature form.

Belongs to the lysine-rich AGP family. In terms of processing, O-glycosylated on the hydroxyproline residues. In terms of tissue distribution, predominantly expressed in open flowers. Also expressed in leaves and stems, and at a lower level in roots.

It localises to the cell membrane. Its function is as follows. Proteoglycan that seems to be implicated in diverse developmental roles such as differentiation, cell-cell recognition, embryogenesis and programmed cell death. The chain is Lysine-rich arabinogalactan protein 17 (AGP17) from Arabidopsis thaliana (Mouse-ear cress).